We begin with the raw amino-acid sequence, 310 residues long: D-erythrulose 1-phosphate 3-epimerase (310 aa).

The enzyme catalyses D-erythrulose 1-phosphate = L-erythrulose 1-phosphate. The protein operates within carbohydrate metabolism; erythritol degradation. Catalyzes the racemization of D-erythrulose 1-phosphate to L-erythrulose 1-phosphate. The protein is D-erythrulose 1-phosphate 3-epimerase of Brucella abortus (strain 2308).